Consider the following 115-residue polypeptide: NADH-ubiquinone oxidoreductase chain 3 (115 aa).

Transmembrane regions (helical) follow at residues 3–23 (LMLV…IAFW), 55–75 (FFLV…LLPL), and 87–107 (VLIM…YEWI).

It belongs to the complex I subunit 3 family. As to quaternary structure, core subunit of respiratory chain NADH dehydrogenase (Complex I) which is composed of 45 different subunits. Interacts with TMEM186. Interacts with TMEM242.

The protein localises to the mitochondrion inner membrane. It catalyses the reaction a ubiquinone + NADH + 5 H(+)(in) = a ubiquinol + NAD(+) + 4 H(+)(out). Functionally, core subunit of the mitochondrial membrane respiratory chain NADH dehydrogenase (Complex I) which catalyzes electron transfer from NADH through the respiratory chain, using ubiquinone as an electron acceptor. Essential for the catalytic activity of complex I. The sequence is that of NADH-ubiquinone oxidoreductase chain 3 from Oryctolagus cuniculus (Rabbit).